The sequence spans 191 residues: PBAN-type neuropeptides (191 aa).

A signal peptide spans 1 to 17 (MFSPLLFFAVSISCVLA). Leucine amide is present on Leu-44. Residues 48-91 (SLRISTEDNRQAFFKLLEAADALKYYYDRLPYEMQADEPETRVT) constitute a propeptide that is removed on maturation. Leu-100, Leu-120, Leu-156, and Leu-166 each carry leucine amide. A propeptide spanning residues 169 to 191 (ELSYDMLPSKLRLVRSTNRTQST) is cleaved from the precursor.

This sequence belongs to the pyrokinin family. Expressed in the subesophageal ganglion.

It localises to the secreted. Functionally, a hormone that controls sex pheromone production in females and pheromone responsiveness in male. The polypeptide is PBAN-type neuropeptides (Spodoptera littoralis (Egyptian cotton leafworm)).